The sequence spans 232 residues: Putative quercetin 2,3-dioxygenase PA1210 (232 aa).

A divalent metal cation is bound by residues histidine 57, histidine 59, histidine 101, and glutamate 103.

This sequence belongs to the pirin family. A divalent metal cation is required as a cofactor.

It catalyses the reaction quercetin + O2 = 2-(3,4-dihydroxybenzoyloxy)-4,6-dihydroxybenzoate + CO. It functions in the pathway flavonoid metabolism; quercetin degradation. Putative quercetin 2,3-dioxygenase. This chain is Putative quercetin 2,3-dioxygenase PA1210, found in Pseudomonas aeruginosa (strain ATCC 15692 / DSM 22644 / CIP 104116 / JCM 14847 / LMG 12228 / 1C / PRS 101 / PAO1).